We begin with the raw amino-acid sequence, 289 residues long: tRNA(Ile)-lysidine synthase (289 aa).

Residue 11–16 coordinates ATP; that stretch reads SGGPDS.

This sequence belongs to the tRNA(Ile)-lysidine synthase family.

The protein resides in the cytoplasm. The enzyme catalyses cytidine(34) in tRNA(Ile2) + L-lysine + ATP = lysidine(34) in tRNA(Ile2) + AMP + diphosphate + H(+). In terms of biological role, ligates lysine onto the cytidine present at position 34 of the AUA codon-specific tRNA(Ile) that contains the anticodon CAU, in an ATP-dependent manner. Cytidine is converted to lysidine, thus changing the amino acid specificity of the tRNA from methionine to isoleucine. The chain is tRNA(Ile)-lysidine synthase from Mycoplasma pneumoniae (strain ATCC 29342 / M129 / Subtype 1) (Mycoplasmoides pneumoniae).